Reading from the N-terminus, the 512-residue chain is GMP synthase [glutamine-hydrolyzing] (512 aa).

The 191-residue stretch at 7–197 folds into the Glutamine amidotransferase type-1 domain; sequence TIIVLDFGSQ…VFGVCGCSEG (191 aa). Cys-84 (nucleophile) is an active-site residue. Residues His-171 and Glu-173 contribute to the active site. A GMPS ATP-PPase domain is found at 198–387; the sequence is WNMENFIEVE…LGIPDEIVWR (190 aa). 225-231 contributes to the ATP binding site; sequence SGGVDSS.

In terms of assembly, homodimer.

It catalyses the reaction XMP + L-glutamine + ATP + H2O = GMP + L-glutamate + AMP + diphosphate + 2 H(+). The protein operates within purine metabolism; GMP biosynthesis; GMP from XMP (L-Gln route): step 1/1. Its function is as follows. Catalyzes the synthesis of GMP from XMP. The polypeptide is GMP synthase [glutamine-hydrolyzing] (Bacillus mycoides (strain KBAB4) (Bacillus weihenstephanensis)).